The sequence spans 132 residues: Large ribosomal subunit protein bL17 (132 aa).

This sequence belongs to the bacterial ribosomal protein bL17 family. As to quaternary structure, part of the 50S ribosomal subunit. Contacts protein L32.

The sequence is that of Large ribosomal subunit protein bL17 from Leptothrix cholodnii (strain ATCC 51168 / LMG 8142 / SP-6) (Leptothrix discophora (strain SP-6)).